Reading from the N-terminus, the 384-residue chain is F-box/kelch-repeat protein At1g64840 (384 aa).

Residues 3-51 form the F-box domain; the sequence is PNWSQLPEELLNLISKNLDNCFDVVHARSICRSWRSAFPFPSSLSTLSY. 2 Kelch repeats span residues 87–137 and 259–309; these read PEYF…PLGF and NPFP…CCSA.

This chain is F-box/kelch-repeat protein At1g64840, found in Arabidopsis thaliana (Mouse-ear cress).